Consider the following 217-residue polypeptide: Thiosulfate dehydrogenase electron acceptor (217 aa).

The signal sequence occupies residues 1–28; it reads MRQFIPMRRVLAVATLGALFWAAPASWA. 2 Cytochrome c domains span residues 29–104 and 116–206; these read AAPP…SKLK and AAAA…AAQP. The heme c site is built by Cys37, Cys40, His41, Cys137, Cys140, and His141.

Binds 2 heme c groups covalently per subunit.

In terms of biological role, acts as an electron acceptor for the thiosulfate dehydrogenase TsdA. In Thiomonas intermedia (strain K12) (Thiobacillus intermedius), this protein is Thiosulfate dehydrogenase electron acceptor (tsdB).